Consider the following 356-residue polypeptide: Phosphate acyltransferase (356 aa).

The protein belongs to the PlsX family. Homodimer. Probably interacts with PlsY.

It is found in the cytoplasm. The enzyme catalyses a fatty acyl-[ACP] + phosphate = an acyl phosphate + holo-[ACP]. Its pathway is lipid metabolism; phospholipid metabolism. Catalyzes the reversible formation of acyl-phosphate (acyl-PO(4)) from acyl-[acyl-carrier-protein] (acyl-ACP). This enzyme utilizes acyl-ACP as fatty acyl donor, but not acyl-CoA. In Escherichia coli (strain K12 / DH10B), this protein is Phosphate acyltransferase.